A 556-amino-acid chain; its full sequence is Solute carrier family 22 member 20 (556 aa).

Residues 1–15 (MAFTDLLDALGGVGR) are Cytoplasmic-facing. Residues 16–36 (FQLVYTALLLLPCGLLACHTF) traverse the membrane as a helical segment. The Extracellular segment spans residues 37–137 (LQNFTAAAPP…LVCEARTLRD (101 aa)). N-linked (GlcNAc...) asparagine glycosylation is found at Asn-39, Asn-54, Asn-61, and Asn-96. Residues 138-158 (LAQSIYMSGVLVGAALFGGLA) traverse the membrane as a helical segment. The Cytoplasmic portion of the chain corresponds to 159 to 166 (DRLGRKAP). Residues 167–187 (LVWSYLQLAVSGAATAYVGSF) form a helical membrane-spanning segment. Over 188-194 (SAYCVFR) the chain is Extracellular. Residues 195–215 (FLMGMTFSGIILNSLSLVVEW) form a helical membrane-spanning segment. The Cytoplasmic segment spans residues 216–225 (MPTRGRTVAG). The helical transmembrane segment at 226-246 (ILLGFSFTLGQLILAGVAYLI) threads the bilayer. Over 247 to 250 (RPWR) the chain is Extracellular. A helical membrane pass occupies residues 251-271 (WLQFAVSAPFLVFFLYSWWLP). The Cytoplasmic segment spans residues 272–339 (ESSRWLLLHG…DLFRTPAIRR (68 aa)). The chain crosses the membrane as a helical span at residues 340-360 (VTCCLMGVWFSNSVAYYGLAM). At 361–366 (DLQKFG) the chain is on the extracellular side. A helical membrane pass occupies residues 367-387 (LSIYLVQALFGIIDIPAMLVA). Topologically, residues 388-397 (TTTMIYVGRR) are cytoplasmic. Residues 398-418 (ATVSSFLILAGLMVIANMFMP) form a helical membrane-spanning segment. Residues 419-425 (EDLQTLR) lie on the Extracellular side of the membrane. The helical transmembrane segment at 426–446 (TVQAALGKGCLASSFICVYLF) threads the bilayer. Topologically, residues 447–457 (TGELYPTEIRQ) are cytoplasmic. Residues 458 to 478 (MGMGFASVNARLGGLVAPLIT) form a helical membrane-spanning segment. The Extracellular segment spans residues 479-485 (TLGEISP). Residues 486–506 (VLPPVSFGATSVLAGMAVACF) traverse the membrane as a helical segment. Residues 507–556 (LTETRNVPLVETIAAMERRVKQGRSKRDTEQKSEEISLQQLGASPLKETI) are Cytoplasmic-facing. Over residues 526 to 541 (VKQGRSKRDTEQKSEE) the composition is skewed to basic and acidic residues. The segment at 526-556 (VKQGRSKRDTEQKSEEISLQQLGASPLKETI) is disordered.

Belongs to the major facilitator (TC 2.A.1) superfamily. Organic cation transporter (TC 2.A.1.19) family. As to expression, highly expressed in olfactory mucosa. Weakly expressed in testis. Not detected in heart, spleen, lung, kidney or brain.

The protein resides in the membrane. In terms of biological role, organic anion transporter that mediates the uptake of estrone sulfate. Inhibited by probenecid, propionate, 2-methylbutyrate, 3-methylbutyrate, benzoate, heptanoate and 2-ethylhaxanoate. May act as an odorant transporter. This is Solute carrier family 22 member 20 (Slc22a20) from Mus musculus (Mouse).